The chain runs to 499 residues: Bifunctional purine biosynthesis protein PurH (499 aa).

The region spanning M1–T144 is the MGS-like domain.

This sequence belongs to the PurH family.

The enzyme catalyses (6R)-10-formyltetrahydrofolate + 5-amino-1-(5-phospho-beta-D-ribosyl)imidazole-4-carboxamide = 5-formamido-1-(5-phospho-D-ribosyl)imidazole-4-carboxamide + (6S)-5,6,7,8-tetrahydrofolate. It catalyses the reaction IMP + H2O = 5-formamido-1-(5-phospho-D-ribosyl)imidazole-4-carboxamide. Its pathway is purine metabolism; IMP biosynthesis via de novo pathway; 5-formamido-1-(5-phospho-D-ribosyl)imidazole-4-carboxamide from 5-amino-1-(5-phospho-D-ribosyl)imidazole-4-carboxamide (10-formyl THF route): step 1/1. The protein operates within purine metabolism; IMP biosynthesis via de novo pathway; IMP from 5-formamido-1-(5-phospho-D-ribosyl)imidazole-4-carboxamide: step 1/1. The sequence is that of Bifunctional purine biosynthesis protein PurH from Clostridium kluyveri (strain NBRC 12016).